Reading from the N-terminus, the 289-residue chain is Bifunctional protein FolD (289 aa).

NADP(+)-binding positions include 166–168 and Ile232; that span reads GVS.

This sequence belongs to the tetrahydrofolate dehydrogenase/cyclohydrolase family. In terms of assembly, homodimer.

The catalysed reaction is (6R)-5,10-methylene-5,6,7,8-tetrahydrofolate + NADP(+) = (6R)-5,10-methenyltetrahydrofolate + NADPH. The enzyme catalyses (6R)-5,10-methenyltetrahydrofolate + H2O = (6R)-10-formyltetrahydrofolate + H(+). It participates in one-carbon metabolism; tetrahydrofolate interconversion. Its function is as follows. Catalyzes the oxidation of 5,10-methylenetetrahydrofolate to 5,10-methenyltetrahydrofolate and then the hydrolysis of 5,10-methenyltetrahydrofolate to 10-formyltetrahydrofolate. The sequence is that of Bifunctional protein FolD from Methylobacillus flagellatus (strain ATCC 51484 / DSM 6875 / VKM B-1610 / KT).